The chain runs to 881 residues: Band 4.1-like protein 1 (881 aa).

Position 1 is an N-acetylmethionine (Met-1). Residues 1–88 are disordered; the sequence is MTTETGPDSE…TPSKAQKSPQ (88 aa). Residues 17–35 are compositionally biased toward low complexity; that stretch reads EAPQQPEAAAAVTTPVTPA. Thr-30 is modified (phosphothreonine). Positions 38–50 are enriched in basic and acidic residues; that stretch reads GHPEANSNEKHPS. The residue at position 75 (Ser-75) is a Phosphoserine. Positions 76–87 are enriched in polar residues; the sequence is ERTTPSKAQKSP. The residue at position 79 (Thr-79) is a Phosphothreonine. The FERM domain maps to 97–378; the sequence is AICRVTLLDA…EHHTFFRLVS (282 aa). Tyr-343 is subject to Phosphotyrosine. Ser-378, Ser-430, and Ser-437 each carry phosphoserine. Residues 428-501 form a disordered region; sequence SRSLDGAEFS…HKQEFLDKPE (74 aa). Residues 444 to 457 show a composition bias toward basic and acidic residues; the sequence is ENHDAGPDGDKRDE. 2 positions are modified to phosphoserine: Ser-461 and Ser-466. Positions 466-501 are enriched in basic and acidic residues; it reads SEAEEGEVRTPTKIKELKPEQETTPRHKQEFLDKPE. Phosphothreonine is present on Thr-475. The interval 483–541 is spectrin--actin-binding; sequence KPEQETTPRHKQEFLDKPEDVLLKHQASINELKRTLKEPNSKLIHRDRDWERERRLPSS. At Ser-510 the chain carries Phosphoserine. The segment covering 514 to 538 has biased composition (basic and acidic residues); that stretch reads LKRTLKEPNSKLIHRDRDWERERRL. The segment at 514–596 is disordered; sequence LKRTLKEPNS…QERDTVFLKD (83 aa). 4 positions are modified to phosphoserine: Ser-540, Ser-541, Ser-544, and Ser-546. At Thr-550 the chain carries Phosphothreonine. A compositionally biased stretch (basic and acidic residues) spans 550 to 577; sequence TPEKANERAGLREGSEEKVKPPRPRAPE. 2 positions are modified to phosphoserine: Ser-564 and Ser-578. A Phosphothreonine modification is found at Thr-580. A phosphoserine mark is found at Ser-639, Ser-648, Ser-650, Ser-667, Ser-672, Ser-678, and Ser-685. Residues 642-699 are disordered; that stretch reads ELDRDKSDSDTEGLLFSRDLNKGAPSQDDESGGIEDSPDRGACSTPDMPQFEPVKTET. At Thr-686 the chain carries Phosphothreonine. Residues Ser-722, Ser-784, and Ser-870 each carry the phosphoserine modification. Residues 746 to 881 are C-terminal (CTD); it reads SITTETISTT…EERDKKPQES (136 aa).

As to quaternary structure, interacts with AGAP2. Highest expression in brain, lower in heart, kidney, pancreas, placenta, lung and skeletal muscle.

The protein localises to the cytoplasm. It is found in the cytoskeleton. Functionally, may function to confer stability and plasticity to neuronal membrane via multiple interactions, including the spectrin-actin-based cytoskeleton, integral membrane channels and membrane-associated guanylate kinases. This Homo sapiens (Human) protein is Band 4.1-like protein 1.